Consider the following 141-residue polypeptide: Large ribosomal subunit protein uL22c (141 aa).

It belongs to the universal ribosomal protein uL22 family. Part of the 50S ribosomal subunit.

Its subcellular location is the plastid. It localises to the chloroplast. Its function is as follows. This protein binds specifically to 23S rRNA. The globular domain of the protein is located near the polypeptide exit tunnel on the outside of the subunit, while an extended beta-hairpin is found that lines the wall of the exit tunnel in the center of the 70S ribosome. In Chloranthus spicatus (Chulantree), this protein is Large ribosomal subunit protein uL22c (rpl22).